Consider the following 161-residue polypeptide: Arachidonate 5-lipoxygenase-activating protein (161 aa).

Topologically, residues 1-8 are lumenal; it reads MDQEAVGN. A helical membrane pass occupies residues 9–30; the sequence is IVLLAIVTLISVVQNGFFAHKV. The Cytoplasmic portion of the chain corresponds to 31-52; that stretch reads EHESKTHNGRSFQRTGTLAFER. Residues 53–77 traverse the membrane as a helical segment; it reads VYTANQNCVDAYPTFLVMLWSAGLL. Residues 78-80 are Lumenal-facing; that stretch reads CSQ. Residues 81-102 traverse the membrane as a helical segment; the sequence is VPAAFAGLMYLFVRQKYFVGYL. Over 103 to 107 the chain is Cytoplasmic; the sequence is GERTQ. Residues 108 to 115 lie within the membrane without spanning it; sequence STPGYIFG. Residues 116–128 traverse the membrane as a helical segment; the sequence is KRIILFLFAMSLA. Residues 129–161 are Lumenal-facing; it reads GILNYFFIALFGSDFENYIKTVTTTISPLLLIP.

The protein belongs to the MAPEG family. Homotrimer. Interacts with LTC4S and ALOX5.

It is found in the nucleus membrane. The protein resides in the endoplasmic reticulum membrane. Required for leukotriene biosynthesis by ALOX5 (5-lipoxygenase). Anchors ALOX5 to the membrane. Binds arachidonic acid, and could play an essential role in the transfer of arachidonic acid to ALOX5. Binds to MK-886, a compound that blocks the biosynthesis of leukotrienes. The polypeptide is Arachidonate 5-lipoxygenase-activating protein (ALOX5AP) (Bos taurus (Bovine)).